The primary structure comprises 256 residues: Major prion protein (256 aa).

Positions 1–24 (MVKSHIGSWILVLFVAMWSDVGLC) are cleaved as a signal peptide. Positions 25–233 (KKRPKPGGGW…ESQAYYQRGA (209 aa)) are interaction with GRB2, ERI3 and SYN1. The disordered stretch occupies residues 28–110 (PKPGGGWNTG…QWNKPSKPKT (83 aa)). 5 consecutive repeat copies span residues 54–62 (PQGGGGWGQ), 63–70 (PHGGGWGQ), 71–78 (PHGGGWGQ), 79–86 (PHGGGWGQ), and 87–95 (PHGGGGWGQ). The tract at residues 54–95 (PQGGGGWGQPHGGGWGQPHGGGWGQPHGGGWGQPHGGGGWGQ) is 5 X 8 AA tandem repeats of P-H-G-G-G-W-G-Q. The segment covering 55–97 (QGGGGWGQPHGGGWGQPHGGGWGQPHGGGWGQPHGGGGWGQGG) has biased composition (gly residues). Residues H64, G65, G66, H72, G73, G74, H80, G81, G82, H88, G90, and G91 each coordinate Cu(2+). Residues C182 and C217 are joined by a disulfide bond. N-linked (GlcNAc...) asparagine glycosylation is found at N184 and N200. A233 carries GPI-anchor amidated alanine lipidation. The propeptide at 234–256 (SVILFSSPPVILLISFLIFLIVG) is removed in mature form.

Belongs to the prion family. Monomer and homodimer. Has a tendency to aggregate into amyloid fibrils containing a cross-beta spine, formed by a steric zipper of superposed beta-strands. Soluble oligomers may represent an intermediate stage on the path to fibril formation. Copper binding may promote oligomerization. Interacts with GRB2, APP, ERI3/PRNPIP and SYN1. Mislocalized cytosolically exposed PrP interacts with MGRN1; this interaction alters MGRN1 subcellular location and causes lysosomal enlargement. Interacts with KIAA1191.

Its subcellular location is the cell membrane. It localises to the golgi apparatus. In terms of biological role, its primary physiological function is unclear. Has cytoprotective activity against internal or environmental stresses. May play a role in neuronal development and synaptic plasticity. May be required for neuronal myelin sheath maintenance. May play a role in iron uptake and iron homeostasis. Soluble oligomers are toxic to cultured neuroblastoma cells and induce apoptosis (in vitro). Association with GPC1 (via its heparan sulfate chains) targets PRNP to lipid rafts. Also provides Cu(2+) or Zn(2+) for the ascorbate-mediated GPC1 deaminase degradation of its heparan sulfate side chains. The protein is Major prion protein (PRNP) of Budorcas taxicolor (Golden takin).